The following is a 39-amino-acid chain: Photosystem II reaction center protein L (39 aa).

Residues 18–38 (SLYLGLLLVFVTGVLFSSYFF) form a helical membrane-spanning segment.

The protein belongs to the PsbL family. As to quaternary structure, PSII is composed of 1 copy each of membrane proteins PsbA, PsbB, PsbC, PsbD, PsbE, PsbF, PsbH, PsbI, PsbJ, PsbK, PsbL, PsbM, PsbT, PsbX, PsbY, PsbZ, Psb30/Ycf12, peripheral proteins PsbO, CyanoQ (PsbQ), PsbU, PsbV and a large number of cofactors. It forms dimeric complexes.

Its subcellular location is the cellular thylakoid membrane. One of the components of the core complex of photosystem II (PSII). PSII is a light-driven water:plastoquinone oxidoreductase that uses light energy to abstract electrons from H(2)O, generating O(2) and a proton gradient subsequently used for ATP formation. It consists of a core antenna complex that captures photons, and an electron transfer chain that converts photonic excitation into a charge separation. This subunit is found at the monomer-monomer interface and is required for correct PSII assembly and/or dimerization. In Synechococcus sp. (strain RCC307), this protein is Photosystem II reaction center protein L.